We begin with the raw amino-acid sequence, 548 residues long: Chaperonin GroEL 3 (548 aa).

Residues 30–33 (TLGP), lysine 51, 87–91 (DGTTT), glycine 415, and aspartate 496 each bind ATP.

Belongs to the chaperonin (HSP60) family. In terms of assembly, forms a cylinder of 14 subunits composed of two heptameric rings stacked back-to-back. Interacts with the co-chaperonin GroES.

The protein localises to the cytoplasm. It carries out the reaction ATP + H2O + a folded polypeptide = ADP + phosphate + an unfolded polypeptide.. Functionally, together with its co-chaperonin GroES, plays an essential role in assisting protein folding. The GroEL-GroES system forms a nano-cage that allows encapsulation of the non-native substrate proteins and provides a physical environment optimized to promote and accelerate protein folding. This is Chaperonin GroEL 3 from Nitrobacter winogradskyi (strain ATCC 25391 / DSM 10237 / CIP 104748 / NCIMB 11846 / Nb-255).